A 333-amino-acid polypeptide reads, in one-letter code: Chlorophyllide reductase 35.5 kDa chain (333 aa).

The segment covering 1-17 has biased composition (basic and acidic residues); the sequence is MTDAPELKAFDQRLRDE. A disordered region spans residues 1–30; it reads MTDAPELKAFDQRLRDEAAEEPTLEVPQGE. ATP-binding positions include 45–50 and K74; that span reads GIGKSF. Mg(2+) is bound at residue S49. The [4Fe-4S] cluster site is built by C130 and C165. Residue 219–220 participates in ATP binding; sequence NK.

The protein belongs to the NifH/BchL/ChlL family. In terms of assembly, homodimer. Chlorophyllide reductase is composed of three subunits; BchX, BchY and BchZ. [4Fe-4S] cluster is required as a cofactor.

It catalyses the reaction 3-deacetyl-3-vinylbacteriochlorophyllide a + 2 oxidized [2Fe-2S]-[ferredoxin] + ADP + phosphate = chlorophyllide a + 2 reduced [2Fe-2S]-[ferredoxin] + ATP + H2O + H(+). The catalysed reaction is bacteriochlorophyllide a + 2 oxidized [2Fe-2S]-[ferredoxin] + ADP + phosphate = 3-acetyl-3-devinylchlorophyllide a + 2 reduced [2Fe-2S]-[ferredoxin] + ATP + H2O + H(+). The enzyme catalyses 3-deacetyl-3-(1-hydroxyethyl)bacteriochlorophyllide a + 2 oxidized [2Fe-2S]-[ferredoxin] + ADP + phosphate = 3-devinyl-3-(1-hydroxyethyl)chlorophyllide a + 2 reduced [2Fe-2S]-[ferredoxin] + ATP + H2O + H(+). It participates in porphyrin-containing compound metabolism; bacteriochlorophyll biosynthesis. Functionally, converts chlorophylls (Chl) into bacteriochlorophylls (BChl) by reducing ring B of the tetrapyrrole. In Cereibacter sphaeroides (strain ATCC 17023 / DSM 158 / JCM 6121 / CCUG 31486 / LMG 2827 / NBRC 12203 / NCIMB 8253 / ATH 2.4.1.) (Rhodobacter sphaeroides), this protein is Chlorophyllide reductase 35.5 kDa chain (bchX).